A 321-amino-acid polypeptide reads, in one-letter code: Transaldolase (321 aa).

K132 functions as the Schiff-base intermediate with substrate in the catalytic mechanism.

This sequence belongs to the transaldolase family. Type 1 subfamily. As to quaternary structure, homodimer.

It is found in the cytoplasm. The enzyme catalyses D-sedoheptulose 7-phosphate + D-glyceraldehyde 3-phosphate = D-erythrose 4-phosphate + beta-D-fructose 6-phosphate. It functions in the pathway carbohydrate degradation; pentose phosphate pathway; D-glyceraldehyde 3-phosphate and beta-D-fructose 6-phosphate from D-ribose 5-phosphate and D-xylulose 5-phosphate (non-oxidative stage): step 2/3. Its function is as follows. Transaldolase is important for the balance of metabolites in the pentose-phosphate pathway. The chain is Transaldolase from Rhizobium etli (strain ATCC 51251 / DSM 11541 / JCM 21823 / NBRC 15573 / CFN 42).